The following is a 918-amino-acid chain: NEDD4-like E3 ubiquitin-protein ligase WWP1 (918 aa).

Positions 1–116 constitute a C2 domain; sequence MATASPRSDT…THNRKLEKVK (116 aa). Polar residues-rich tracts occupy residues 150-164, 209-219, and 235-258; these read TNRS…QQNG, NGENTPSSPSQ, and SAPT…STMG. Disordered regions lie at residues 150–182 and 209–360; these read TNRS…PRLP and NGEN…PHGR. Residues 266–281 are compositionally biased toward low complexity; it reads TTSTSNCTSTTTQEPP. WW domains are found at residues 345–378, 377–410, 452–485, and 492–525; these read EALP…RPQP, QPLP…RPTM, GPLP…DPRT, and EPLP…DPRN. The interaction with ERBB4 stretch occupies residues 345–525; it reads EALPSGWEQR…RTTTFKDPRN (181 aa). The segment at 345–527 is required for interaction with and ubiquitination of AMOTL2. Required for interaction with YAP1; sequence EALPSGWEQR…TTFKDPRNGK (183 aa). In terms of domain architecture, HECT spans 584-918; the sequence is KPYDLRRRLY…IEETEGFGQE (335 aa). Catalysis depends on C886, which acts as the Glycyl thioester intermediate.

Interacts with the Crumbs complex components PALS1 and PATJ; interaction with the Crumbs complex is enhanced by WWP1's interaction with AMOTL2 and facilitates WWP1 localization to the plasma membrane. Interaction with the Crumbs complex promotes WWP1 monoubiquitination of AMOTL2, which activates the Hippo signaling pathway. Binds SCNN1A, SCNN1B, SCNN1G, WBP1, WBP2, DRPLA and adenovirus type 2 PIII. Interacts with TGIF. Binds KLF2 AND HIVEP3. Interacts with RNF11. Interacts with SPART. Interacts with NDFIP1 and NDFIP2; this interaction activates the E3 ubiquitin-protein ligase. Interacts with ERBB4 isoforms JM-B CYT-1 and JM-A CYT-1. Does not interact with ERB4 isoform JMA-A CYT-2. Interacts with SMAD1, SMAD2, SMAD3, SMAD5, SMAD6, SMAD7, TGFBR1 and TGFBR2. Associates with the TGFBR1:TGFBR2 receptor complex in presence of SMAD7. Interacts with SKIL isoform 1. Interacts with TP63 isoform 1 and isoform 2. Interacts (via WW domains) with ARRDC1, ARRDC2 and ARRDC3. Auto-ubiquitinated and ubiquitinated by RNF11.

Its subcellular location is the cytoplasm. It is found in the cell membrane. It localises to the nucleus. The protein localises to the cell junction. It carries out the reaction S-ubiquitinyl-[E2 ubiquitin-conjugating enzyme]-L-cysteine + [acceptor protein]-L-lysine = [E2 ubiquitin-conjugating enzyme]-L-cysteine + N(6)-ubiquitinyl-[acceptor protein]-L-lysine.. It functions in the pathway protein modification; protein ubiquitination. Its activity is regulated as follows. Activated by NDFIP1- and NDFIP2-binding. E3 ubiquitin-protein ligase which accepts ubiquitin from an E2 ubiquitin-conjugating enzyme in the form of a thioester and then directly transfers the ubiquitin to targeted substrates. Ubiquitinates and promotes degradation of SMAD2 in response to TGF-beta signaling, which requires interaction with TGIF. Ubiquitinates ERBB4 isoforms JM-A CYT-1 and JM-B CYT-1, KLF2, KLF5 and TP63 and promotes their proteasomal degradation. Ubiquitinates RNF11 without targeting it for degradation. Ubiquitinates and promotes degradation of TGFBR1; the ubiquitination is enhanced by SMAD7. Ubiquitinates SMAD6 and SMAD7. Activates the Hippo signaling pathway in response to cell contact inhibition and recruitment to the Crumbs complex at the cell membrane. Monoubiquitinates AMOTL2 which facilitates its interaction with and activation of LATS2. LATS2 then phosphorylates YAP1, excluding it from the nucleus and therefore ultimately represses YAP1-driven transcription of target genes. This is NEDD4-like E3 ubiquitin-protein ligase WWP1 (Wwp1) from Mus musculus (Mouse).